Reading from the N-terminus, the 223-residue chain is Small ribosomal subunit protein uS3 (223 aa).

Positions 39 to 107 (VRSYLAKKLS…PVHINIQEIR (69 aa)) constitute a KH type-2 domain.

The protein belongs to the universal ribosomal protein uS3 family. In terms of assembly, part of the 30S ribosomal subunit. Forms a tight complex with proteins S10 and S14.

Functionally, binds the lower part of the 30S subunit head. Binds mRNA in the 70S ribosome, positioning it for translation. The chain is Small ribosomal subunit protein uS3 from Nitrosococcus oceani (strain ATCC 19707 / BCRC 17464 / JCM 30415 / NCIMB 11848 / C-107).